The following is a 652-amino-acid chain: ATP-binding cassette sub-family G member 5 (652 aa).

Positions 1 to 30 are disordered; it reads MSELPFLSPEGARGPHNNRGSQSSLEEGSV. Topologically, residues 1–384 are cytoplasmic; that stretch reads MSELPFLSPE…RVTRNLMRNK (384 aa). Residues 18–30 are compositionally biased toward polar residues; that stretch reads NRGSQSSLEEGSV. The 256-residue stretch at 39–294 folds into the ABC transporter domain; sequence LGVLNVSFSV…FNNCGYPCPE (256 aa). ATP is bound at residue 87–94; sequence GSSGSGKT. Residues 385–405 form a helical membrane-spanning segment; the sequence is QVVIMRLVQNLIMGLFLIFYL. The ABC transmembrane type-2 domain occupies 389–646; the sequence is MRLVQNLIMG…ILGMVVFKVR (258 aa). The Extracellular portion of the chain corresponds to 406 to 422; sequence LRVQNNMLKGAVQDRVG. The helical transmembrane segment at 423–443 threads the bilayer; the sequence is LLYQLVGATPYTGMLNAVNLF. Topologically, residues 444–468 are cytoplasmic; the sequence is PMLRAVSDQESQDGLYQKWQMLLAY. The chain crosses the membrane as a helical span at residues 469–490; it reads VLHALPFSIVATVIFSSVCYWT. Residues 491 to 501 lie on the Extracellular side of the membrane; that stretch reads LGLYPEVARFG. A helical transmembrane segment spans residues 502–522; sequence YFSAALLAPHLIGEFLTLVLL. At 523–529 the chain is on the cytoplasmic side; the sequence is GMVQNPN. A helical membrane pass occupies residues 530–550; it reads IVNSIVALLSISGLLIGSGFI. At 551–624 the chain is on the extracellular side; sequence RNIEEMPIPL…PGATSRFTTN (74 aa). 2 N-linked (GlcNAc...) asparagine glycosylation sites follow: Asn585 and Asn592. A helical transmembrane segment spans residues 625 to 645; sequence FLILYSFIPTLVILGMVVFKV. The Cytoplasmic portion of the chain corresponds to 646-652; sequence RDYLISR.

This sequence belongs to the ABC transporter superfamily. ABCG family. Eye pigment precursor importer (TC 3.A.1.204) subfamily. Heterodimer with ABCG8. It depends on Mg(2+) as a cofactor. N-glycosylated. N-glycosylation is important for efficient export out of the endoplasmic reticulum. Detected in liver (at protein level). Expressed only in liver and intestine.

It is found in the cell membrane. Its subcellular location is the apical cell membrane. It carries out the reaction cholesterol(in) + ATP + H2O = cholesterol(out) + ADP + phosphate + H(+). The enzyme catalyses sitosterol(in) + ATP + H2O = sitosterol(out) + ADP + phosphate + H(+). In terms of biological role, ABCG5 and ABCG8 form an obligate heterodimer that mediates Mg(2+)- and ATP-dependent sterol transport across the cell membrane. Plays an essential role in the selective transport of dietary plant sterols and cholesterol in and out of the enterocytes and in the selective sterol excretion by the liver into bile. Required for normal sterol homeostasis. The heterodimer with ABCG8 has ATPase activity. In Rattus norvegicus (Rat), this protein is ATP-binding cassette sub-family G member 5.